Consider the following 664-residue polypeptide: Exoribonuclease 2 (664 aa).

The RNB domain maps to 193–521 (RIDMTHIPFV…INHRMLKALI (329 aa)). The S1 motif domain occupies 568-650 (QTLFTGEIFD…ENRSLVAKPT (83 aa)).

The protein belongs to the RNR ribonuclease family. RNase II subfamily.

Its subcellular location is the cytoplasm. It carries out the reaction Exonucleolytic cleavage in the 3'- to 5'-direction to yield nucleoside 5'-phosphates.. Functionally, involved in mRNA degradation. Hydrolyzes single-stranded polyribonucleotides processively in the 3' to 5' direction. This is Exoribonuclease 2 from Vibrio vulnificus (strain CMCP6).